We begin with the raw amino-acid sequence, 506 residues long: Probable UTP--glucose-1-phosphate uridylyltransferase (506 aa).

Phosphoserine occurs at positions 15 and 17. Residues 115–118 (LNGG), K129, Q192, and G221 each bind UTP. 117–118 (GG) is a substrate binding site. K129 provides a ligand contact to Mg(2+). Residues H222 and 250–252 (NID) each bind substrate. 2 residues coordinate UTP: D252 and K394. Residue D252 participates in Mg(2+) binding. Residue K394 is part of the active site. The tract at residues 455–506 (HLTITGDVNIGRNVTLKGTVIIVASDANRIDIPNGSVLENCVITGNLNILEH) is oligomerization.

The protein belongs to the UDPGP type 1 family. As to quaternary structure, homooctamer.

It localises to the cytoplasm. Its subcellular location is the nucleus. The enzyme catalyses alpha-D-glucose 1-phosphate + UTP + H(+) = UDP-alpha-D-glucose + diphosphate. Its function is as follows. Plays a central role as a glucosyl donor in cellular metabolic pathways. This Schizosaccharomyces pombe (strain 972 / ATCC 24843) (Fission yeast) protein is Probable UTP--glucose-1-phosphate uridylyltransferase (fyu1).